Reading from the N-terminus, the 140-residue chain is Large ribosomal subunit protein uL14 (140 aa).

Belongs to the universal ribosomal protein uL14 family. As to quaternary structure, part of the 50S ribosomal subunit. Forms a cluster with proteins L3 and L24e, part of which may contact the 16S rRNA in 2 intersubunit bridges.

Its function is as follows. Binds to 23S rRNA. Forms part of two intersubunit bridges in the 70S ribosome. This chain is Large ribosomal subunit protein uL14, found in Staphylothermus marinus (strain ATCC 43588 / DSM 3639 / JCM 9404 / F1).